A 309-amino-acid polypeptide reads, in one-letter code: Elongation factor Ts (309 aa).

An involved in Mg(2+) ion dislocation from EF-Tu region spans residues 82–85; sequence TDFV.

It belongs to the EF-Ts family.

The protein localises to the cytoplasm. Associates with the EF-Tu.GDP complex and induces the exchange of GDP to GTP. It remains bound to the aminoacyl-tRNA.EF-Tu.GTP complex up to the GTP hydrolysis stage on the ribosome. This is Elongation factor Ts (tsf) from Rickettsia prowazekii (strain Madrid E).